Consider the following 229-residue polypeptide: DNA mismatch repair protein MutH (229 aa).

It belongs to the MutH family.

The protein resides in the cytoplasm. In terms of biological role, sequence-specific endonuclease that cleaves unmethylated GATC sequences. It is involved in DNA mismatch repair. The protein is DNA mismatch repair protein MutH of Escherichia coli (strain SMS-3-5 / SECEC).